A 1014-amino-acid chain; its full sequence is DNA translocase FtsK 2 (1014 aa).

The helical transmembrane segment at 1 to 21 (MFWIVLIVILLLALAGLFFVR) threads the bilayer. 3 disordered regions span residues 89 to 142 (ESEP…EDIA), 283 to 318 (RHAG…RRRV), and 487 to 525 (SQAV…AVSE). Acidic residues predominate over residues 121-140 (EEAETEEAEAAEEEAADTED). Residues 298–307 (DVSQGQSVSD) show a composition bias toward polar residues. Residues 662–871 (GQPVVTDLGK…FQVSSKIDSR (210 aa)) form the FtsK domain. Residue 682–687 (GSGKSV) coordinates ATP.

Belongs to the FtsK/SpoIIIE/SftA family. Homohexamer. Forms a ring that surrounds DNA.

The protein resides in the cell inner membrane. Essential cell division protein that coordinates cell division and chromosome segregation. The N-terminus is involved in assembly of the cell-division machinery. The C-terminus functions as a DNA motor that moves dsDNA in an ATP-dependent manner towards the dif recombination site, which is located within the replication terminus region. Translocation stops specifically at Xer-dif sites, where FtsK interacts with the Xer recombinase, allowing activation of chromosome unlinking by recombination. FtsK orienting polar sequences (KOPS) guide the direction of DNA translocation. FtsK can remove proteins from DNA as it translocates, but translocation stops specifically at XerCD-dif site, thereby preventing removal of XerC and XerD from dif. This is DNA translocase FtsK 2 (ftsK2) from Neisseria meningitidis serogroup A / serotype 4A (strain DSM 15465 / Z2491).